The chain runs to 324 residues: UDP-galactose transporter homolog 1 (324 aa).

2 helical membrane-spanning segments follow: residues 7 to 27 (LVIA…AQEP) and 42 to 62 (HSSF…LCYL). A glycan (N-linked (GlcNAc...) asparagine) is linked at asparagine 97. 7 helical membrane passes run 106 to 126 (VGYM…HVLV), 135 to 155 (KALV…GGAE), 161 to 181 (ASLY…LTNA), 199 to 219 (HLMV…LVLF), 237 to 257 (ILTY…FVFF), 265 to 285 (LVLA…SIVV), and 290 to 310 (VRPV…WETV).

It belongs to the nucleotide-sugar transporter family. SLC35B subfamily.

Its subcellular location is the endoplasmic reticulum membrane. May be involved in specific transport of UDP-Gal from the cytosol to the Golgi lumen. Involved in the maintenance of optimal conditions for the folding of secretory pathway proteins in the endoplasmic reticulum. This is UDP-galactose transporter homolog 1 (HUT1) from Eremothecium gossypii (strain ATCC 10895 / CBS 109.51 / FGSC 9923 / NRRL Y-1056) (Yeast).